We begin with the raw amino-acid sequence, 208 residues long: Sodium/potassium-transporting ATPase subunit beta-1-interacting protein 4 (208 aa).

Transmembrane regions (helical) follow at residues 35–55 (APIL…FGTI), 62–82 (VMVY…IICF), and 151–171 (CLQI…VSVF).

It belongs to the NKAIN family. In terms of assembly, interacts with ATP1B1.

It localises to the cell membrane. The protein is Sodium/potassium-transporting ATPase subunit beta-1-interacting protein 4 (NKAIN4) of Homo sapiens (Human).